A 209-amino-acid chain; its full sequence is Orotate phosphoribosyltransferase (209 aa).

Residues R96, K100, H102, and 122 to 130 (EDLISTGGS) each bind 5-phospho-alpha-D-ribose 1-diphosphate. S126 contacts orotate.

This sequence belongs to the purine/pyrimidine phosphoribosyltransferase family. PyrE subfamily. Homodimer. Mg(2+) serves as cofactor.

It catalyses the reaction orotidine 5'-phosphate + diphosphate = orotate + 5-phospho-alpha-D-ribose 1-diphosphate. Its pathway is pyrimidine metabolism; UMP biosynthesis via de novo pathway; UMP from orotate: step 1/2. In terms of biological role, catalyzes the transfer of a ribosyl phosphate group from 5-phosphoribose 1-diphosphate to orotate, leading to the formation of orotidine monophosphate (OMP). This chain is Orotate phosphoribosyltransferase, found in Streptococcus gordonii (strain Challis / ATCC 35105 / BCRC 15272 / CH1 / DL1 / V288).